Here is a 121-residue protein sequence, read N- to C-terminus: Holo-[acyl-carrier-protein] synthase (121 aa).

Mg(2+)-binding residues include D6 and E55.

The protein belongs to the P-Pant transferase superfamily. AcpS family. It depends on Mg(2+) as a cofactor.

The protein resides in the cytoplasm. It carries out the reaction apo-[ACP] + CoA = holo-[ACP] + adenosine 3',5'-bisphosphate + H(+). Transfers the 4'-phosphopantetheine moiety from coenzyme A to a Ser of acyl-carrier-protein. The polypeptide is Holo-[acyl-carrier-protein] synthase (Chloroherpeton thalassium (strain ATCC 35110 / GB-78)).